The chain runs to 212 residues: 3-isopropylmalate dehydratase small subunit (212 aa).

Belongs to the LeuD family. LeuD type 1 subfamily. Heterodimer of LeuC and LeuD.

It catalyses the reaction (2R,3S)-3-isopropylmalate = (2S)-2-isopropylmalate. It participates in amino-acid biosynthesis; L-leucine biosynthesis; L-leucine from 3-methyl-2-oxobutanoate: step 2/4. Catalyzes the isomerization between 2-isopropylmalate and 3-isopropylmalate, via the formation of 2-isopropylmaleate. This is 3-isopropylmalate dehydratase small subunit from Laribacter hongkongensis (strain HLHK9).